The chain runs to 310 residues: Sporozoite surface protein P36 (310 aa).

The signal sequence occupies residues 1-24; the sequence is MRKALYSLLFYMCICLYIYTPVFM. 6-Cys domains are found at residues 25–157 and 168–309; these read ANLK…IKKT and YIKG…STKA. 6 cysteine pairs are disulfide-bonded: C38–C48, C62–C137, C80–C135, C172–C196, C210–C291, and C227–C289. N-linked (GlcNAc...) asparagine glycosylation is found at N72, N114, and N118. N290 is a glycosylation site (N-linked (GlcNAc...) asparagine).

It localises to the cell surface. The protein resides in the cell membrane. Functionally, involved in sporozoite infection of hepatocytes and replication therein. This chain is Sporozoite surface protein P36 (P36), found in Plasmodium yoelii yoelii.